The following is a 153-amino-acid chain: Nascent polypeptide-associated complex subunit beta (153 aa).

Disordered stretches follow at residues 1-40 (MSDV…ADDK) and 126-153 (LQKE…PKVE). The segment covering 23–32 (TPRRKVKRAP) has biased composition (basic residues). Positions 36 to 101 (GADDKKLQLA…GEDKELTELV (66 aa)) constitute an NAC-A/B domain. A compositionally biased stretch (acidic residues) spans 132–147 (EDDDEIPDLVEGENFE).

The protein belongs to the NAC-beta family. As to quaternary structure, part of the nascent polypeptide-associated complex (NAC), consisting of EGD2 and EGD1. NAC associates with ribosomes via EGD1.

It is found in the cytoplasm. The protein localises to the nucleus. Its function is as follows. Component of the nascent polypeptide-associated complex (NAC), a dynamic component of the ribosomal exit tunnel, protecting the emerging polypeptides from interaction with other cytoplasmic proteins to ensure appropriate nascent protein targeting. The NAC complex also promotes mitochondrial protein import by enhancing productive ribosome interactions with the outer mitochondrial membrane and blocks the inappropriate interaction of ribosomes translating non-secretory nascent polypeptides with translocation sites in the membrane of the endoplasmic reticulum. EGD1 may act as a transcription factor that exert a negative effect on the expression of several genes that are transcribed by RNA polymerase II. The chain is Nascent polypeptide-associated complex subunit beta (EGD1) from Gibberella zeae (strain ATCC MYA-4620 / CBS 123657 / FGSC 9075 / NRRL 31084 / PH-1) (Wheat head blight fungus).